Reading from the N-terminus, the 311-residue chain is DNA-directed RNA polymerase subunit alpha (311 aa).

Residues 1-226 (MIEFEKPNIT…EHLDLFTNLT (226 aa)) form an alpha N-terminal domain (alpha-NTD) region. Residues 243–311 (DDRILDRTIE…IDLGLGLKDK (69 aa)) form an alpha C-terminal domain (alpha-CTD) region.

This sequence belongs to the RNA polymerase alpha chain family. In terms of assembly, homodimer. The RNAP catalytic core consists of 2 alpha, 1 beta, 1 beta' and 1 omega subunit. When a sigma factor is associated with the core the holoenzyme is formed, which can initiate transcription.

The enzyme catalyses RNA(n) + a ribonucleoside 5'-triphosphate = RNA(n+1) + diphosphate. Its function is as follows. DNA-dependent RNA polymerase catalyzes the transcription of DNA into RNA using the four ribonucleoside triphosphates as substrates. This chain is DNA-directed RNA polymerase subunit alpha, found in Streptococcus pneumoniae serotype 4 (strain ATCC BAA-334 / TIGR4).